Here is a 1134-residue protein sequence, read N- to C-terminus: DNA damage-binding protein 1 (1134 aa).

It belongs to the DDB1 family. As to quaternary structure, interacts with cdt-1 and cul-4. Expressed at high levels in the spermatheca of adult hermaphrodites.

It localises to the cytoplasm. The protein resides in the nucleus. It participates in protein modification; protein ubiquitination. Functionally, plays a role in DNA repair. May be a component of an E3 ubiquitin-protein ligase which promotes histone ubiquitination in response to UV irradiation. Histone ubiquitination may be important for subsequent DNA repair. Promotes the degradation of the replication licensing factor cdt-1 during S-phase, thereby preventing rereplication of DNA during a single round of cell division. This Caenorhabditis elegans protein is DNA damage-binding protein 1 (ddb-1).